Consider the following 173-residue polypeptide: Protein C2 (173 aa).

A zinc finger spans residues 69–85 (CNCHFTIHHECNRGFSH).

It belongs to the geminiviridae transcriptional activator protein family. As to quaternary structure, monomer. Interacting with and inactivating host adenosine kinase 2 (ADK2) in the cytoplasm. Interacts with and inhibits host SNF1 kinase.

The protein resides in the host cytoplasm. Functionally, acts as a suppressor of RNA-mediated gene silencing, also known as post-transcriptional gene silencing (PTGS), a mechanism of plant viral defense that limits the accumulation of viral RNAs. Suppresses the host RNA silencing by inhibiting adenosine kinase 2 (ADK2), a kinase involved in a general methylation pathway. Also suppresses the host basal defense by interacting with and inhibiting SNF1 kinase, a key regulator of cell metabolism implicated in innate antiviral defense. Determines pathogenicity. This chain is Protein C2, found in Beet curly top virus (strain California/Logan) (BCTV).